The primary structure comprises 499 residues: MSALTDLTIAEARDGLRAKRFSARELTDAHLGAIEALNPRLNAYITVTPDQARAQAAAADRVLASGEAGALTGIPVASKDMFCSEGIRTTAGSRILENFVPPYESAVTERMLRDGAVILGKANLDEFAMGSANLTSAYGPVENPWKRHDDDAVLVPGGSSGGSAAAVAAHLALGATGTDTGGSIRQPASYCGIAGIKPTYGRCSRWGIVAYASSLDQAGPFARTVRDNAILLRSMAGHDPRDSTSAMREVPDFEAACQRGVKGLRIGLPREYVADGMSEEIRTLWQNGAAMLRAAGAEVVDVSLPHTKHALASYYIIAPAEASSNLARYDGVRFGHRSSDNRDLNDLYERSRAEGFGAEVKRRIMVGTYVLSAGYYDAYYLKAQKVRALIARDFAEAFRSVDALLTPTAPSAAFAQGETIDDPVAMYLNDVFTVPINLAGLPAMSIPAGLSTTGLPLGLQIIGRAFDEETVFAVSAALEQAAAFTHRPALRADTLNAGA.

Active-site charge relay system residues include Lys-79 and Ser-159. Catalysis depends on Ser-183, which acts as the Acyl-ester intermediate.

Belongs to the amidase family. GatA subfamily. Heterotrimer of A, B and C subunits.

The catalysed reaction is L-glutamyl-tRNA(Gln) + L-glutamine + ATP + H2O = L-glutaminyl-tRNA(Gln) + L-glutamate + ADP + phosphate + H(+). Functionally, allows the formation of correctly charged Gln-tRNA(Gln) through the transamidation of misacylated Glu-tRNA(Gln) in organisms which lack glutaminyl-tRNA synthetase. The reaction takes place in the presence of glutamine and ATP through an activated gamma-phospho-Glu-tRNA(Gln). The protein is Glutamyl-tRNA(Gln) amidotransferase subunit A of Granulibacter bethesdensis (strain ATCC BAA-1260 / CGDNIH1).